We begin with the raw amino-acid sequence, 365 residues long: Embryonic developmental protein tofu-6 (365 aa).

One can recognise an RRM domain in the interval 13–90 (AGFHIRNVPK…YSLKVSDHKN (78 aa)).

Functionally, required maternally for early embryonic cell divisions. May have a role in DNA replication. The protein is Embryonic developmental protein tofu-6 of Caenorhabditis briggsae.